Here is a 43-residue protein sequence, read N- to C-terminus: Histone H3 (43 aa).

In terms of assembly, the nucleosome is a histone octamer containing two molecules each of H2A, H2B, H3 and H4 assembled in one H3-H4 heterotetramer and two H2A-H2B heterodimers. The octamer wraps approximately 147 bp of DNA.

Its subcellular location is the nucleus. It is found in the chromosome. In terms of biological role, core component of nucleosome. Nucleosomes wrap and compact DNA into chromatin, limiting DNA accessibility to the cellular machineries which require DNA as a template. Histones thereby play a central role in transcription regulation, DNA repair, DNA replication and chromosomal stability. DNA accessibility is regulated via a complex set of post-translational modifications of histones, also called histone code, and nucleosome remodeling. The chain is Histone H3 from Penaeus vannamei (Whiteleg shrimp).